We begin with the raw amino-acid sequence, 242 residues long: Exosome complex component ski6 (242 aa).

It belongs to the RNase PH family. In terms of assembly, component of the RNA exosome complex. Specifically part of the catalytically inactive RNA exosome core complex (Exo-9) which may associate with the catalytic subunits rrp6 and dis3 in cytoplasmic- and nuclear-specific RNA exosome complex forms. Exo-9 is formed by a hexameric base ring of RNase PH domain-containing subunits and a cap ring consisting of csl4, rrp4 and rrp40.

It is found in the cytoplasm. The protein localises to the nucleus. The protein resides in the nucleolus. Its function is as follows. Non-catalytic component of the RNA exosome complex which has 3'-&gt;5' exoribonuclease activity and participates in a multitude of cellular RNA processing and degradation events. In the nucleus, the RNA exosome complex is involved in proper maturation of stable RNA species such as rRNA, snRNA and snoRNA, in the elimination of RNA processing by-products and non-coding 'pervasive' transcripts, such as antisense RNA species and cryptic unstable transcripts (CUTs), and of mRNAs with processing defects, thereby limiting or excluding their export to the cytoplasm. In the cytoplasm, the RNA exosome complex is involved in general mRNA turnover and in RNA surveillance pathways, preventing translation of aberrant mRNAs. The catalytic inactive RNA exosome core complex of 9 subunits (Exo-9) is proposed to play a pivotal role in the binding and presentation of RNA for ribonucleolysis, and to serve as a scaffold for the association with catalytic subunits and accessory proteins or complexes. ski6 is part of the hexameric ring of RNase PH domain-containing subunits proposed to form a central channel which threads RNA substrates for degradation. The protein is Exosome complex component ski6 (ski6) of Schizosaccharomyces pombe (strain 972 / ATCC 24843) (Fission yeast).